The primary structure comprises 1339 residues: Aldehyde oxidase 1 (1339 aa).

In terms of domain architecture, 2Fe-2S ferredoxin-type spans 5–92; the sequence is SELLFYVNGR…GAAVTTVEGI (88 aa). The [2Fe-2S] cluster site is built by Cys44, Cys49, Cys52, and Cys74. Position 113 (Gln113) interacts with Mo-molybdopterin. Residues Cys114, Cys117, Cys149, and Cys151 each coordinate [2Fe-2S] cluster. A Mo-molybdopterin-binding site is contributed by Cys151. An FAD-binding PCMH-type domain is found at 236-421; the sequence is FGSDRMTWIS…ISVNIPYSRK (186 aa). FAD-binding positions include 264–271, Ala345, Ser354, His358, Asp367, and Leu411; that span reads VVMGNTSV. Mo-molybdopterin contacts are provided by residues 807–808 and Met1048; that span reads AF. Position 1069 is a phosphoserine (Ser1069). Mo-molybdopterin-binding positions include 1089–1092, Gln1204, and Leu1269; that span reads GSVV. Glu1271 (proton acceptor; for azaheterocycle hydroxylase activity) is an active-site residue.

This sequence belongs to the xanthine dehydrogenase family. As to quaternary structure, homodimer. It depends on [2Fe-2S] cluster as a cofactor. FAD is required as a cofactor. Mo-molybdopterin serves as cofactor. Post-translationally, the N-terminus is blocked. In terms of tissue distribution, expressed at high levels in liver, lung and spleen. Also expressed in kindey, eye, testis, duodenum, esophagus and thymus (at protein level).

The protein localises to the cytoplasm. It carries out the reaction an aldehyde + O2 + H2O = a carboxylate + H2O2 + H(+). The catalysed reaction is retinal + O2 + H2O = retinoate + H2O2 + H(+). In terms of biological role, oxidase with broad substrate specificity, oxidizing aromatic azaheterocycles, such as N1-methylnicotinamide, N-methylphthalazinium and phthalazine, as well as aldehydes, such as benzaldehyde, retinal, pyridoxal, and vanillin. Plays a key role in the metabolism of xenobiotics and drugs containing aromatic azaheterocyclic substituents. Is probably involved in the regulation of reactive oxygen species homeostasis. May be a prominent source of superoxide generation via the one-electron reduction of molecular oxygen. May also catalyze nitric oxide (NO) production via the reduction of nitrite to NO with NADH or aldehyde as electron donor. May play a role in adipogenesis. The chain is Aldehyde oxidase 1 from Bos taurus (Bovine).